The following is a 78-amino-acid chain: Large ribosomal subunit protein bL28 (78 aa).

Belongs to the bacterial ribosomal protein bL28 family.

The chain is Large ribosomal subunit protein bL28 from Synechococcus sp. (strain JA-2-3B'a(2-13)) (Cyanobacteria bacterium Yellowstone B-Prime).